Here is a 101-residue protein sequence, read N- to C-terminus: Enhancer of yellow 2 transcription factor (101 aa).

Belongs to the ENY2 family. Component of the nuclear pore complex (NPC)-associated AMEX complex (anchoring and mRNA export complex), composed of at least e(y)2 and xmas-2. Component of the SAGA transcription coactivator-HAT complexes, at least composed of Ada2b, e(y)2, Pcaf/Gcn5, Taf10 and Nipped-A/Trrap. Within the SAGA complex, e(y)2, Sgf11, and not/nonstop form an additional subcomplex of SAGA called the DUB module (deubiquitination module). Component of the THO complex, composed of at least e(y)2, HPR1, THO2, THOC5, THOC6 and THOC7. Interacts with e(y)1. Interacts with su(Hw) (via zinc fingers). Interacts with xmas-2; required for localization to the nuclear periphery. Interacts with the nuclear pore complex (NPC).

Its subcellular location is the nucleus. It localises to the nucleoplasm. The protein resides in the cytoplasm. Functionally, involved in mRNA export coupled transcription activation by association with both the AMEX and the SAGA complexes. The SAGA complex is a multiprotein complex that activates transcription by remodeling chromatin and mediating histone acetylation and deubiquitination. Within the SAGA complex, participates in a subcomplex that specifically deubiquitinates histone H2B. The SAGA complex is recruited to specific gene promoters by activators, where it is required for transcription. Required for nuclear receptor-mediated transactivation. Involved in transcription elongation by recruiting the THO complex onto nascent mRNA. The AMEX complex functions in docking export-competent ribonucleoprotein particles (mRNPs) to the nuclear entrance of the nuclear pore complex (nuclear basket). AMEX participates in mRNA export and accurate chromatin positioning in the nucleus by tethering genes to the nuclear periphery. The sequence is that of Enhancer of yellow 2 transcription factor from Drosophila simulans (Fruit fly).